The primary structure comprises 314 residues: DNA-directed RNA polymerase subunit alpha (314 aa).

An alpha N-terminal domain (alpha-NTD) region spans residues 1–228 (MAQFHYECVE…SLFEPLKDIT (228 aa)). Positions 240-314 (DPTSQIPIEE…LPQEKVAKAT (75 aa)) are alpha C-terminal domain (alpha-CTD).

The protein belongs to the RNA polymerase alpha chain family. In cyanobacteria the RNAP catalytic core is composed of 2 alpha, 1 beta, 1 beta', 1 gamma and 1 omega subunit. When a sigma factor is associated with the core the holoenzyme is formed, which can initiate transcription.

It catalyses the reaction RNA(n) + a ribonucleoside 5'-triphosphate = RNA(n+1) + diphosphate. DNA-dependent RNA polymerase catalyzes the transcription of DNA into RNA using the four ribonucleoside triphosphates as substrates. In Trichodesmium erythraeum (strain IMS101), this protein is DNA-directed RNA polymerase subunit alpha.